We begin with the raw amino-acid sequence, 74 residues long: UPF0435 protein GK0418 (74 aa).

Belongs to the UPF0435 family.

The protein is UPF0435 protein GK0418 of Geobacillus kaustophilus (strain HTA426).